The primary structure comprises 546 residues: MAKIIKFDQEGRNAILKGVNTLADAVKVTLGPKGRNVIIEKSFGSPLITKDGVTVAKEIELEDKFENMGAQLVKEVASKTSDVAGDGTTTATVLAQAIYRQGSKLVAAGHNPMEIKRGIDSAVETIVAELQKISKPIKDHKEIAQVGTISANNDKTIGGIIAEAMEKVGKEGVITVEEAKAMETSLETVEGMQFDRGYLSPYFVTDPERMEASLENANILIHDKKISNMKDLLPILEQTAKSGRPLLIIAEDIEGEALATLVVNKLRGVLNICAVKAPGFGDRRKAMLEDIAVLTGGKVISEELGFKLENATFDMLGTAKRVTIDKDNTTIIDGDGSEADIQGRVKQIRAQIEETSSDYDREKLQERLAKLVGGVAVIKVGAATETEMKEKKARVEDALHATRAAVDEGIVPGGGVAYIRSLGALEGISLPAEQQFGVTLIKRALEEPIRQIAQNAGVDGSIVVDKVKNGKDAFGFNAADDEYVDMIAAGIIDPTKVSRSALQNAASVAGLMLTTEAMIADKPKEEAAMPAMPGGMGGMGGMGGMM.

ATP is bound by residues 29–32 (TLGP), Lys-50, 86–90 (DGTTT), Gly-414, 477–479 (NAA), and Asp-493.

This sequence belongs to the chaperonin (HSP60) family. As to quaternary structure, forms a cylinder of 14 subunits composed of two heptameric rings stacked back-to-back. Interacts with the co-chaperonin GroES.

Its subcellular location is the cytoplasm. The catalysed reaction is ATP + H2O + a folded polypeptide = ADP + phosphate + an unfolded polypeptide.. Functionally, together with its co-chaperonin GroES, plays an essential role in assisting protein folding. The GroEL-GroES system forms a nano-cage that allows encapsulation of the non-native substrate proteins and provides a physical environment optimized to promote and accelerate protein folding. The polypeptide is Chaperonin GroEL (Geobacter metallireducens (strain ATCC 53774 / DSM 7210 / GS-15)).